The chain runs to 176 residues: Ribosome maturation factor RimM (176 aa).

The region spanning 101 to 174 (EGHYYIYQLL…EIRVELPPGL (74 aa)) is the PRC barrel domain.

Belongs to the RimM family. As to quaternary structure, binds ribosomal protein uS19.

The protein resides in the cytoplasm. Functionally, an accessory protein needed during the final step in the assembly of 30S ribosomal subunit, possibly for assembly of the head region. Essential for efficient processing of 16S rRNA. May be needed both before and after RbfA during the maturation of 16S rRNA. It has affinity for free ribosomal 30S subunits but not for 70S ribosomes. The sequence is that of Ribosome maturation factor RimM from Moorella thermoacetica (strain ATCC 39073 / JCM 9320).